Here is a 74-residue protein sequence, read N- to C-terminus: DUP240 protein DFP2 (74 aa).

Belongs to the DUP/COS family.

Its subcellular location is the cytoplasm. It is found in the membrane. This Saccharomyces cerevisiae (strain ATCC 204508 / S288c) (Baker's yeast) protein is DUP240 protein DFP2.